A 421-amino-acid chain; its full sequence is ATP-dependent RNA helicase RhlB (421 aa).

The short motif at 9-37 is the Q motif element; it reads QKFSDFALHPKVVEALEKKGFHNCTPIQA. Positions 40 to 219 constitute a Helicase ATP-binding domain; sequence LPLTLAGRDV…FEQMNNAEYI (180 aa). 53-60 serves as a coordination point for ATP; it reads AQTGTGKT. A DEAD box motif is present at residues 165–168; the sequence is DEAD. Residues 245–390 form the Helicase C-terminal domain; the sequence is RLLQTLIEEE…VSKYNPDALM (146 aa). The disordered stretch occupies residues 392–421; that stretch reads DLPKPLRLTRPRTGNGPRRTGAPRNRRRSG. Low complexity predominate over residues 402–414; the sequence is PRTGNGPRRTGAP.

This sequence belongs to the DEAD box helicase family. RhlB subfamily. As to quaternary structure, component of the RNA degradosome, which is a multiprotein complex involved in RNA processing and mRNA degradation.

Its subcellular location is the cytoplasm. It catalyses the reaction ATP + H2O = ADP + phosphate + H(+). DEAD-box RNA helicase involved in RNA degradation. Has RNA-dependent ATPase activity and unwinds double-stranded RNA. In Escherichia coli (strain SMS-3-5 / SECEC), this protein is ATP-dependent RNA helicase RhlB.